Reading from the N-terminus, the 214-residue chain is tRNA (guanine-N(7)-)-methyltransferase (214 aa).

S-adenosyl-L-methionine-binding residues include Asp35, Glu60, Asn87, and Asp113. Asp113 is an active-site residue. Residues Lys117 and Asp149 each contribute to the substrate site.

It belongs to the class I-like SAM-binding methyltransferase superfamily. TrmB family.

It catalyses the reaction guanosine(46) in tRNA + S-adenosyl-L-methionine = N(7)-methylguanosine(46) in tRNA + S-adenosyl-L-homocysteine. The protein operates within tRNA modification; N(7)-methylguanine-tRNA biosynthesis. In terms of biological role, catalyzes the formation of N(7)-methylguanine at position 46 (m7G46) in tRNA. The polypeptide is tRNA (guanine-N(7)-)-methyltransferase (Prochlorococcus marinus (strain NATL1A)).